The following is a 116-amino-acid chain: Putative pterin-4-alpha-carbinolamine dehydratase (116 aa).

The protein belongs to the pterin-4-alpha-carbinolamine dehydratase family.

The enzyme catalyses (4aS,6R)-4a-hydroxy-L-erythro-5,6,7,8-tetrahydrobiopterin = (6R)-L-erythro-6,7-dihydrobiopterin + H2O. This is Putative pterin-4-alpha-carbinolamine dehydratase from Xylella fastidiosa (strain 9a5c).